The primary structure comprises 405 residues: Probable tRNA sulfurtransferase (405 aa).

Residues 60-165 (ETIDQRLKLV…QDAIYISNQL (106 aa)) form the THUMP domain. Residues 183 to 184 (ML), 208 to 209 (HF), R265, G287, and Q296 contribute to the ATP site.

It belongs to the ThiI family.

It localises to the cytoplasm. The enzyme catalyses [ThiI sulfur-carrier protein]-S-sulfanyl-L-cysteine + a uridine in tRNA + 2 reduced [2Fe-2S]-[ferredoxin] + ATP + H(+) = [ThiI sulfur-carrier protein]-L-cysteine + a 4-thiouridine in tRNA + 2 oxidized [2Fe-2S]-[ferredoxin] + AMP + diphosphate. It catalyses the reaction [ThiS sulfur-carrier protein]-C-terminal Gly-Gly-AMP + S-sulfanyl-L-cysteinyl-[cysteine desulfurase] + AH2 = [ThiS sulfur-carrier protein]-C-terminal-Gly-aminoethanethioate + L-cysteinyl-[cysteine desulfurase] + A + AMP + 2 H(+). Its pathway is cofactor biosynthesis; thiamine diphosphate biosynthesis. In terms of biological role, catalyzes the ATP-dependent transfer of a sulfur to tRNA to produce 4-thiouridine in position 8 of tRNAs, which functions as a near-UV photosensor. Also catalyzes the transfer of sulfur to the sulfur carrier protein ThiS, forming ThiS-thiocarboxylate. This is a step in the synthesis of thiazole, in the thiamine biosynthesis pathway. The sulfur is donated as persulfide by IscS. This chain is Probable tRNA sulfurtransferase, found in Lactobacillus johnsonii (strain CNCM I-12250 / La1 / NCC 533).